The primary structure comprises 502 residues: Lysine--tRNA ligase (502 aa).

2 residues coordinate Mg(2+): Glu409 and Glu416.

It belongs to the class-II aminoacyl-tRNA synthetase family. Homodimer. It depends on Mg(2+) as a cofactor.

It localises to the cytoplasm. The enzyme catalyses tRNA(Lys) + L-lysine + ATP = L-lysyl-tRNA(Lys) + AMP + diphosphate. This is Lysine--tRNA ligase from Shouchella clausii (strain KSM-K16) (Alkalihalobacillus clausii).